A 155-amino-acid polypeptide reads, in one-letter code: UPF0178 protein Clos_2709 (155 aa).

The protein belongs to the UPF0178 family.

The protein is UPF0178 protein Clos_2709 of Alkaliphilus oremlandii (strain OhILAs) (Clostridium oremlandii (strain OhILAs)).